The following is a 555-amino-acid chain: Protein FAM234A (555 aa).

A compositionally biased stretch (basic and acidic residues) spans 1-22; that stretch reads MMDNKDLEAEIHPLKNEDKKSQ. The interval 1 to 40 is disordered; it reads MMDNKDLEAEIHPLKNEDKKSQENPGNLPRNEDNLKSKPV. Over 1–49 the chain is Cytoplasmic; it reads MMDNKDLEAEIHPLKNEDKKSQENPGNLPRNEDNLKSKPVPSRLSRCRT. At serine 21 the chain carries Phosphoserine. Residues 50 to 70 traverse the membrane as a helical; Signal-anchor for type II membrane protein segment; the sequence is VAFFLSLFTCLFVVFVLSFII. The Extracellular portion of the chain corresponds to 71-555; sequence PCPDRPSSQG…FSRLRYRSEM (485 aa). Asparagine 116, asparagine 120, asparagine 317, asparagine 392, and asparagine 476 each carry an N-linked (GlcNAc...) asparagine glycan.

It belongs to the FAM234 family.

It localises to the membrane. The protein is Protein FAM234A of Mus musculus (Mouse).